We begin with the raw amino-acid sequence, 552 residues long: MAGUK p55 subfamily member 2 (552 aa).

2 consecutive L27 domains span residues 8 to 59 (SESA…EETK) and 60 to 118 (LEAV…YETP). At S42 the chain carries Phosphoserine. Residue T117 is modified to Phosphothreonine. Position 121 is a phosphoserine (S121). A PDZ domain is found at 140–219 (MVGIRKTAGE…SVILKILPSY (80 aa)). The 69-residue stretch at 225–293 (PRQVFVKCHF…PSQLLEEKRK (69 aa)) folds into the SH3 domain. In terms of domain architecture, Guanylate kinase-like spans 350 to 537 (RKTLVLIGAQ…TFRELQTAME (188 aa)).

The protein belongs to the MAGUK family. In terms of assembly, can homomultimerise. Interacts with CACNG2. Interacts (via the SH3-Guanylate kinase-like sub-module) with DLG4/PSD95 and DLGAP1/GKAP. Interacts (via the PDZ domain) with CADM1 (via C-terminus). Interacts with KCNN2/SK2 (via N-terminal domain). Interacts with SRC. Phosphorylated by SRC. In terms of tissue distribution, expressed in hippocampal neurons.

The protein resides in the cell projection. It is found in the dendrite. Its subcellular location is the postsynaptic density. The protein localises to the cytoplasm. It localises to the cytoskeleton. The protein resides in the membrane. Functionally, postsynaptic MAGUK scaffold protein that links CADM1 cell adhesion molecules to core components of the postsynaptic density. In CA1 pyramidal neurons, required for synaptic KCNN2-containing channel function and long-term potentiation expression. Seems to negatively regulate SRC function in epithelial cells. The chain is MAGUK p55 subfamily member 2 from Rattus norvegicus (Rat).